Consider the following 287-residue polypeptide: Bifunctional protein FolD (287 aa).

NADP(+) contacts are provided by residues 165-167 (GRS), Ser190, and Ile231.

The protein belongs to the tetrahydrofolate dehydrogenase/cyclohydrolase family. As to quaternary structure, homodimer.

The catalysed reaction is (6R)-5,10-methylene-5,6,7,8-tetrahydrofolate + NADP(+) = (6R)-5,10-methenyltetrahydrofolate + NADPH. It catalyses the reaction (6R)-5,10-methenyltetrahydrofolate + H2O = (6R)-10-formyltetrahydrofolate + H(+). It participates in one-carbon metabolism; tetrahydrofolate interconversion. In terms of biological role, catalyzes the oxidation of 5,10-methylenetetrahydrofolate to 5,10-methenyltetrahydrofolate and then the hydrolysis of 5,10-methenyltetrahydrofolate to 10-formyltetrahydrofolate. In Carboxydothermus hydrogenoformans (strain ATCC BAA-161 / DSM 6008 / Z-2901), this protein is Bifunctional protein FolD.